The chain runs to 173 residues: Small ribosomal subunit protein uS5 (173 aa).

An S5 DRBM domain is found at L18 to V81.

The protein belongs to the universal ribosomal protein uS5 family. Part of the 30S ribosomal subunit. Contacts proteins S4 and S8.

With S4 and S12 plays an important role in translational accuracy. In terms of biological role, located at the back of the 30S subunit body where it stabilizes the conformation of the head with respect to the body. In Bordetella petrii (strain ATCC BAA-461 / DSM 12804 / CCUG 43448), this protein is Small ribosomal subunit protein uS5.